We begin with the raw amino-acid sequence, 245 residues long: Orotidine 5'-phosphate decarboxylase (245 aa).

Residues aspartate 22, lysine 44, 71 to 80 (DLKFHDIPNT), threonine 131, arginine 192, glutamine 201, glycine 221, and arginine 222 each bind substrate. Residue lysine 73 is the Proton donor of the active site.

This sequence belongs to the OMP decarboxylase family. Type 1 subfamily. In terms of assembly, homodimer.

It catalyses the reaction orotidine 5'-phosphate + H(+) = UMP + CO2. It functions in the pathway pyrimidine metabolism; UMP biosynthesis via de novo pathway; UMP from orotate: step 2/2. Functionally, catalyzes the decarboxylation of orotidine 5'-monophosphate (OMP) to uridine 5'-monophosphate (UMP). The polypeptide is Orotidine 5'-phosphate decarboxylase (Salmonella typhimurium (strain LT2 / SGSC1412 / ATCC 700720)).